The sequence spans 177 residues: Large ribosomal subunit protein uL6 (177 aa).

It belongs to the universal ribosomal protein uL6 family. Part of the 50S ribosomal subunit.

In terms of biological role, this protein binds to the 23S rRNA, and is important in its secondary structure. It is located near the subunit interface in the base of the L7/L12 stalk, and near the tRNA binding site of the peptidyltransferase center. The sequence is that of Large ribosomal subunit protein uL6 from Aromatoleum aromaticum (strain DSM 19018 / LMG 30748 / EbN1) (Azoarcus sp. (strain EbN1)).